The following is a 558-amino-acid chain: Armadillo repeat-containing X-linked protein 5 (558 aa).

Composition is skewed to basic and acidic residues over residues 1-14 (MVDS…RGKA) and 139-156 (KSHD…REEA). Disordered stretches follow at residues 1–34 (MVDS…NGKT) and 139–163 (KSHD…MKSS). ARM repeat units follow at residues 300 to 339 (CKSR…GISP), 422 to 461 (VKFE…CLSK), 463 to 503 (HANT…NINF), and 520 to 558 (SELI…ILKL).

This sequence belongs to the eutherian X-chromosome-specific Armcx family.

The chain is Armadillo repeat-containing X-linked protein 5 (ARMCX5) from Pongo abelii (Sumatran orangutan).